The sequence spans 257 residues: Triosephosphate isomerase, cytosolic (257 aa).

2 residues coordinate substrate: N10 and K12. The active-site Electrophile is the H96. The active-site Proton acceptor is E167.

The protein belongs to the triosephosphate isomerase family. As to quaternary structure, homodimer. As to expression, higher levels found in leaves than in roots.

Its subcellular location is the cytoplasm. The enzyme catalyses D-glyceraldehyde 3-phosphate = dihydroxyacetone phosphate. It participates in carbohydrate biosynthesis; gluconeogenesis. The protein operates within carbohydrate degradation; glycolysis; D-glyceraldehyde 3-phosphate from glycerone phosphate: step 1/1. The polypeptide is Triosephosphate isomerase, cytosolic (TPI) (Stellaria longipes (Longstalk starwort)).